The following is a 74-amino-acid chain: Ubiquitin-like protein FUBI (74 aa).

The protein belongs to the ubiquitin family.

This is Ubiquitin-like protein FUBI (Fau) from Mus spicilegus (Steppe mouse).